Reading from the N-terminus, the 91-residue chain is Small ribosomal subunit protein uS19 (91 aa).

The protein belongs to the universal ribosomal protein uS19 family.

Protein S19 forms a complex with S13 that binds strongly to the 16S ribosomal RNA. In Bordetella bronchiseptica (strain ATCC BAA-588 / NCTC 13252 / RB50) (Alcaligenes bronchisepticus), this protein is Small ribosomal subunit protein uS19.